Consider the following 129-residue polypeptide: Small ribosomal subunit protein uS11 (129 aa).

Belongs to the universal ribosomal protein uS11 family. Part of the 30S ribosomal subunit. Interacts with proteins S7 and S18. Binds to IF-3.

Located on the platform of the 30S subunit, it bridges several disparate RNA helices of the 16S rRNA. Forms part of the Shine-Dalgarno cleft in the 70S ribosome. This chain is Small ribosomal subunit protein uS11, found in Rhizobium etli (strain CIAT 652).